The primary structure comprises 130 residues: Small ribosomal subunit protein uS11 (130 aa).

Positions 111–130 (IRDVTPVPHNGSRPPKRRRA) are disordered.

It belongs to the universal ribosomal protein uS11 family. In terms of assembly, part of the 30S ribosomal subunit. Interacts with proteins S7 and S18. Binds to IF-3.

Located on the platform of the 30S subunit, it bridges several disparate RNA helices of the 16S rRNA. Forms part of the Shine-Dalgarno cleft in the 70S ribosome. In Lactobacillus acidophilus (strain ATCC 700396 / NCK56 / N2 / NCFM), this protein is Small ribosomal subunit protein uS11.